The following is a 226-amino-acid chain: 2-C-methyl-D-erythritol 4-phosphate cytidylyltransferase (226 aa).

This sequence belongs to the IspD/TarI cytidylyltransferase family. IspD subfamily.

The catalysed reaction is 2-C-methyl-D-erythritol 4-phosphate + CTP + H(+) = 4-CDP-2-C-methyl-D-erythritol + diphosphate. Its pathway is isoprenoid biosynthesis; isopentenyl diphosphate biosynthesis via DXP pathway; isopentenyl diphosphate from 1-deoxy-D-xylulose 5-phosphate: step 2/6. Its function is as follows. Catalyzes the formation of 4-diphosphocytidyl-2-C-methyl-D-erythritol from CTP and 2-C-methyl-D-erythritol 4-phosphate (MEP). The polypeptide is 2-C-methyl-D-erythritol 4-phosphate cytidylyltransferase (Parasynechococcus marenigrum (strain WH8102)).